The sequence spans 51 residues: MARYRCCRSQSRSRCCRPRRRCRRRRRRSCRARRRATRCCRRRYRLRSRRY.

Belongs to the protamine P1 family. As to expression, testis.

Its subcellular location is the nucleus. It is found in the chromosome. Its function is as follows. Protamines substitute for histones in the chromatin of sperm during the haploid phase of spermatogenesis. They compact sperm DNA into a highly condensed, stable and inactive complex. This chain is Sperm protamine P1 (PRM1), found in Trachypithecus cristatus (Silvered leaf-monkey).